We begin with the raw amino-acid sequence, 28 residues long: Omega-conotoxin-like CnVIIH (28 aa).

3 cysteine pairs are disulfide-bonded: Cys-1–Cys-16, Cys-8–Cys-20, and Cys-15–Cys-27. Pro-7 carries the post-translational modification 4-hydroxyproline; partial. Met-12 carries the post-translational modification Methionine sulfoxide. Cysteine amide is present on Cys-27.

The protein belongs to the conotoxin O1 superfamily. As to expression, expressed by the venom duct.

The protein resides in the secreted. Functionally, omega-conotoxins act at presynaptic membranes, they bind and block voltage-gated calcium channels (Cav). This toxin blocks N-type calcium channels (Cav2.2/CACNA1B) with high potency. Unexpectedly, it does not show any blocking activity at amphibian neuromuscular junction. In vivo, when intracerebroventricularly injected into mice causes shaking activity, and, at higher doses, causes mild tremors. When injected intramuscularly into fish, it causes paralysis, and, at higher doses, causes death. The polypeptide is Omega-conotoxin-like CnVIIH (Conus consors (Singed cone)).